Here is an 89-residue protein sequence, read N- to C-terminus: Small ribosomal subunit protein uS15 (89 aa).

The protein belongs to the universal ribosomal protein uS15 family. In terms of assembly, part of the 30S ribosomal subunit. Forms a bridge to the 50S subunit in the 70S ribosome, contacting the 23S rRNA.

Its function is as follows. One of the primary rRNA binding proteins, it binds directly to 16S rRNA where it helps nucleate assembly of the platform of the 30S subunit by binding and bridging several RNA helices of the 16S rRNA. In terms of biological role, forms an intersubunit bridge (bridge B4) with the 23S rRNA of the 50S subunit in the ribosome. This chain is Small ribosomal subunit protein uS15, found in Chlorobaculum parvum (strain DSM 263 / NCIMB 8327) (Chlorobium vibrioforme subsp. thiosulfatophilum).